Consider the following 1517-residue polypeptide: MSKFKVIEIKEDARPRDFEAFQLRLASPEKIKSWSYGEVKKPETINYRTLKPERDGLFCAKIFGPIRDYECLCGKYKKMRFKGVKCEKCGVEVANSKVRRSRMGHIELVTPVAHIWYVNSLPSRIGTLLGVKMKDLERVLYYEAYIVENPGDAFYDNESTKKVEYCDVLNEEQYQNLMQRYENSGFKARMGGEVVRDLLANLDLVALLNQLKEEMAATNSEAKKKTIIKRLKVVENFLNSNLNANADSDEAVPNRPEWMMITNLPVLPPDLRPLVALDGGKFAVSDVNDLYRRVINRNTRLKKLMELDAPEIIIRNEKRMLQEAVDALFDNGRRANAVKGANKRPLKSLSEIIKGKQGRFRQNLLGKRVDFSGRSVIVVGPKLRMDQCGLPKKMALELFKPHLLAKLEEKGYATTVKQAKKMIENKTNEVWECLEEVVKGHPVMLNRAPTLHKLSIQAFHPVLVEGKAIQLHPLVCAAFNADFDGDQMAVHVPLSQEAIAECKVLMLSSMNILLPASGKSVTVPSQDMVLGIYYLSLEKAGAKGSHKICTGIDEVMMALESKCLDIHASIQTMVDGRKITTTAGRLIIKSILPDFVPENSWNKVLKKKDIAALVDYVYKQGGLEITASFLDRLKNLGFEYATKAGISISIADIIVPNDKQKAIDEAKKQVREIQNSYNLGLITSGERYNKIIDIWKSTNNVLSKEMMKLVEKDKEGFNSIYMMADSGARGSAAQISQLAAMRGLMTKPDGSIIETPIISNFREGLNVLEYFISTHGARKGLADTALKTANAGYLTRKLIDVAQNVKITIEDCGTHEGVEINEITADSSIIETLEERILGRVLAEDVIDPITNSVLFAEGTLMDEEKAKILGESGIKSVNIRTPITCKAKKGICAKCYGINLGEGKLVKPGEAVGIISAQSIGEPGTQLTLRTFHSGGTASTDLQDRQVSAQKEGFIRFYNLKTYKNKEGKNIVANRRNAAILLVEPKIKTPFKGVINIENIHEDVIVSIKNKKQEVKYILRKYDLAKPNELAGVSGSIDGKLYLPYQSGMQVEENESIVEVIKEGWNVPNRIPFASEILVEDGEPVVQNIKAGEKGTLKFYILKGDGLDRVKNVKKGDIVKEKGFFVVIADENDREAKRHYIPRESKIEFNDSEKIDDANTIIASAPKKERKVIAEWDAYNNTIIAEIDGVVSFEDIEAGYSADEQIDEATGKRSLVINEYLPSGVRPTLVIAGKGDKAVRYQLEPKTVIFVHDGDKIAQADILAKTPKAAAKSKDITGGLPRVSELFEARKPKNAAVIAEIDGVVRFDKPLRSKERIIIQAEDGTSAEYLIDKSKHIQVRDGEFIHAGEKLTDGVVSSHDVLKILGEKALHYYLISEIQQVYRGQGVVISDKHIEVIVSQMLRQVKVVDSGHTKFIEGDLVSRRKFREENERIIRMGGEPAIAEPVLLGVTRAAIGSDSVISAASFQETTKVLTEASIAGKFDYLEDLKENVILGRMIPVGTGLYGEQNLKLKEQE.

Zn(2+) is bound by residues cysteine 71, cysteine 73, cysteine 86, and cysteine 89. Mg(2+)-binding residues include aspartate 482, aspartate 484, and aspartate 486. Residues cysteine 812, cysteine 886, cysteine 893, and cysteine 896 each coordinate Zn(2+).

It belongs to the RNA polymerase beta' chain family. As to quaternary structure, the RNAP catalytic core consists of 2 alpha, 1 beta, 1 beta' and 1 omega subunit. When a sigma factor is associated with the core the holoenzyme is formed, which can initiate transcription. The cofactor is Mg(2+). Requires Zn(2+) as cofactor.

The catalysed reaction is RNA(n) + a ribonucleoside 5'-triphosphate = RNA(n+1) + diphosphate. In terms of biological role, DNA-dependent RNA polymerase catalyzes the transcription of DNA into RNA using the four ribonucleoside triphosphates as substrates. The protein is DNA-directed RNA polymerase subunit beta' of Campylobacter jejuni subsp. jejuni serotype O:6 (strain 81116 / NCTC 11828).